Reading from the N-terminus, the 502-residue chain is ATP synthase subunit alpha (502 aa).

The segment at 115–139 (VDGLGPVETTETRPIESPAPGVMDR) is disordered. 169–176 (GDRQTGKT) is an ATP binding site.

This sequence belongs to the ATPase alpha/beta chains family. As to quaternary structure, F-type ATPases have 2 components, CF(1) - the catalytic core - and CF(0) - the membrane proton channel. CF(1) has five subunits: alpha(3), beta(3), gamma(1), delta(1), epsilon(1). CF(0) has three main subunits: a(1), b(2) and c(9-12). The alpha and beta chains form an alternating ring which encloses part of the gamma chain. CF(1) is attached to CF(0) by a central stalk formed by the gamma and epsilon chains, while a peripheral stalk is formed by the delta and b chains.

Its subcellular location is the cell membrane. The catalysed reaction is ATP + H2O + 4 H(+)(in) = ADP + phosphate + 5 H(+)(out). In terms of biological role, produces ATP from ADP in the presence of a proton gradient across the membrane. The alpha chain is a regulatory subunit. The protein is ATP synthase subunit alpha of Geobacillus thermodenitrificans (strain NG80-2).